The chain runs to 302 residues: N-acetylmuramic acid 6-phosphate etherase (302 aa).

The SIS domain occupies 58 to 221 (IFERFKKGGR…TTTLMIKLGK (164 aa)). Glutamate 86 acts as the Proton donor in catalysis. Glutamate 117 is a catalytic residue.

This sequence belongs to the GCKR-like family. MurNAc-6-P etherase subfamily. In terms of assembly, homodimer.

It carries out the reaction N-acetyl-D-muramate 6-phosphate + H2O = N-acetyl-D-glucosamine 6-phosphate + (R)-lactate. The protein operates within amino-sugar metabolism; N-acetylmuramate degradation. Functionally, specifically catalyzes the cleavage of the D-lactyl ether substituent of MurNAc 6-phosphate, producing GlcNAc 6-phosphate and D-lactate. This is N-acetylmuramic acid 6-phosphate etherase from Mycoplasma mycoides subsp. mycoides SC (strain CCUG 32753 / NCTC 10114 / PG1).